The sequence spans 744 residues: Prestin (744 aa).

The Cytoplasmic portion of the chain corresponds to Met-1 to Lys-75. Residues Phe-76–Ala-105 form a helical membrane-spanning segment. Residues Ala-106–Pro-108 are Extracellular-facing. Residues Pro-109–Leu-126 traverse the membrane as a helical segment. Topologically, residues Gly-127–Phe-137 are cytoplasmic. Residues Ala-138–Leu-151 form a helical membrane-spanning segment. Residues Val-152–Thr-168 lie on the Extracellular side of the membrane. The short motif at Ile-158 to Thr-168 is the Involved in motor function element. N-linked (GlcNAc...) asparagine glycosylation is found at Asn-163 and Asn-166. A helical membrane pass occupies residues Glu-169 to Cys-196. Residues Arg-197 to Thr-206 are Cytoplasmic-facing. The helical transmembrane segment at Glu-207 to Phe-230 threads the bilayer. Over Gly-231–Phe-241 the chain is Extracellular. The segment at residues Ser-242–Asn-253 is an intramembrane region (helical). Over Val-254 to Asn-258 the chain is Extracellular. Residues Val-259–Phe-282 form a helical membrane-spanning segment. Residues Lys-283–Pro-291 are Cytoplasmic-facing. The helical transmembrane segment at Leu-292–Phe-307 threads the bilayer. Residues Asn-308–Asp-332 are Extracellular-facing. Residues Thr-333–Tyr-367 form a helical membrane-spanning segment. Residues Gln-368 to Asp-370 are Cytoplasmic-facing. The helical transmembrane segment at Gly-371–Phe-388 threads the bilayer. Over Gln-389 to Ser-396 the chain is Extracellular. A helical membrane pass occupies residues Leu-397 to Thr-406. Ser-398 is a binding site for salicylate. The Cytoplasmic segment spans residues Gly-407–Thr-410. A helical transmembrane segment spans residues Gln-411–Phe-432. Topologically, residues Glu-433–Pro-436 are extracellular. Residues Gln-437–Thr-464 traverse the membrane as a helical segment. A topological domain (cytoplasmic) is located at residue Ser-465. Residues Lys-466–Phe-481 traverse the membrane as a helical segment. The Extracellular segment spans residues Leu-482–Gly-483. The helical transmembrane segment at Leu-484–Gln-504 threads the bilayer. An extended region for STAS domain region spans residues Ser-505–Ala-718. Residues Ser-505–Ala-744 are Cytoplasmic-facing. In terms of domain architecture, STAS spans Ala-525 to Ser-713. A disordered region spans residues Ala-718–Ala-744.

The protein belongs to the SLC26A/SulP transporter (TC 2.A.53) family. In terms of assembly, homodimer. Interacts (via STAS domain) with CALM; this interaction is calcium-dependent and the STAS domain interacts with only one lobe of CALM which is an elongated conformation. Interacts with MYH1.

It is found in the lateral cell membrane. The enzyme catalyses 2 hydrogencarbonate(in) + chloride(out) = 2 hydrogencarbonate(out) + chloride(in). Its function is as follows. Voltage-sensitive motor protein that drives outer hair cell (OHC) electromotility (eM) and participates in sound amplification in the hearing organ. Converts changes in the transmembrane electric potential into mechanical displacements resulting in the coupling of its expansion to movement of a charged voltage sensor across the lipid membrane. The nature of the voltage sensor is not completely clear, and two models compete. In the first model, acts as an incomplete transporter where intracellular chloride anion acts as extrinsic voltage sensor that drives conformational change in the protein which is sufficient to produce a length change in the plane of the membrane and hence in the length of the OHC. The second model in which multiple charged amino acid residues are distributed at the intracellular and extracellular membrane interfaces that form an intrinsic voltage sensor, whose movement produces the non-linear capacitance (NLC). However, the effective voltage sensor may be the result of a hybrid voltage sensor, assembled from intrinsic charge (charged residues) and extrinsic charge (bound anion). Notably, binding of anions to the anion-binding pocket partially neutralizes the intrinsic positive charge rather than to form an electrically negative sensor, therefore remaining charge may serve as voltage sensor that, after depolarization, moves from down (expanded state) to up (contracted) conformation, which is accompanied by an eccentric contraction of the intermembrane cross-sectional area of the protein as well as a major increase in the hydrophobic thickness of the protein having as consequences the plasma membrane thickening and the cell contraction after membrane depolarization. The anion-binding pocket transits from the inward-open (Down) state, where it is exposed toward the intracellular solvent in the absence of anion, to the occluded (Up) state upon anion binding. Salicylate competes for the anion-binding site and inhibits the voltage-sensor movement, and therefore inhibits the charge transfer and electromotility by displacing Cl(-) from the anion-binding site and by preventing the structural transitions to the contracted state. In addition, can act as a weak Cl(-)/HCO3(-) antiporter across the cell membrane and so regulate the intracellular pH of the outer hair cells (OHCs), while firstly found as being unable to mediate electrogenic anion transport. Moreover, supports a role in cardiac mechanical amplification serving as an elastic element to enhance the actomyosin- based sarcomere contraction system. This is Prestin from Homo sapiens (Human).